The sequence spans 292 residues: 33 kDa chaperonin (292 aa).

2 disulfides stabilise this stretch: Cys-229/Cys-231 and Cys-262/Cys-265.

It belongs to the HSP33 family. Under oxidizing conditions two disulfide bonds are formed involving the reactive cysteines. Under reducing conditions zinc is bound to the reactive cysteines and the protein is inactive.

It is found in the cytoplasm. Redox regulated molecular chaperone. Protects both thermally unfolding and oxidatively damaged proteins from irreversible aggregation. Plays an important role in the bacterial defense system toward oxidative stress. This is 33 kDa chaperonin from Photobacterium profundum (strain SS9).